Reading from the N-terminus, the 96-residue chain is MLPEEIIKRPIITEKSMSMIPQKKYTFEVDRRANKIEIKKAVEQLFGVEVEKVWTMNVKPKRKRVGRFEGRTKAWKKAIVKLTDKSKTIEFFDSLI.

It belongs to the universal ribosomal protein uL23 family. Part of the 50S ribosomal subunit. Contacts protein L29, and trigger factor when it is bound to the ribosome.

Functionally, one of the early assembly proteins it binds 23S rRNA. One of the proteins that surrounds the polypeptide exit tunnel on the outside of the ribosome. Forms the main docking site for trigger factor binding to the ribosome. The protein is Large ribosomal subunit protein uL23 of Caldicellulosiruptor saccharolyticus (strain ATCC 43494 / DSM 8903 / Tp8T 6331).